The sequence spans 175 residues: NADH-quinone oxidoreductase subunit B (175 aa).

[4Fe-4S] cluster-binding residues include cysteine 54, cysteine 55, cysteine 119, and cysteine 149.

Belongs to the complex I 20 kDa subunit family. In terms of assembly, NDH-1 is composed of at least 14 different subunits, Nqo1 to Nqo14. The complex has a L-shaped structure, with the hydrophobic arm (subunits Nqo7, Nqo8, Nqo10 to Nqo14) embedded in the inner membrane and the hydrophilic peripheral arm (subunits Nqo1 to Nqo6, Nqo9) protruding into the bacterial cytoplasm. The hydrophilic domain contains all the redox centers. NADH-quinone oxidoreductase forms a supercomplex with ubiquinol-cytochrome c reductase complex (complex III or cytochrome b-c1 complex) and cytochrome c oxidase (complex IV), which stabilizes the NADH-quinone oxidoreductase complex. [4Fe-4S] cluster is required as a cofactor.

The protein resides in the cell inner membrane. It catalyses the reaction a quinone + NADH + 5 H(+)(in) = a quinol + NAD(+) + 4 H(+)(out). Functionally, NDH-1 shuttles electrons from NADH, via FMN and iron-sulfur (Fe-S) centers, to quinones in the respiratory chain. The immediate electron acceptor for the enzyme in this species is believed to be ubiquinone. Couples the redox reaction to proton translocation (for every two electrons transferred, four hydrogen ions are translocated across the cytoplasmic membrane), and thus conserves the redox energy in a proton gradient. This chain is NADH-quinone oxidoreductase subunit B, found in Paracoccus denitrificans (strain Pd 1222).